Consider the following 466-residue polypeptide: UDP-N-acetylmuramoylalanine--D-glutamate ligase (466 aa).

Residue 115–121 (GTDGKTT) participates in ATP binding.

It belongs to the MurCDEF family.

It localises to the cytoplasm. The enzyme catalyses UDP-N-acetyl-alpha-D-muramoyl-L-alanine + D-glutamate + ATP = UDP-N-acetyl-alpha-D-muramoyl-L-alanyl-D-glutamate + ADP + phosphate + H(+). It functions in the pathway cell wall biogenesis; peptidoglycan biosynthesis. In terms of biological role, cell wall formation. Catalyzes the addition of glutamate to the nucleotide precursor UDP-N-acetylmuramoyl-L-alanine (UMA). This Chlorobium phaeobacteroides (strain BS1) protein is UDP-N-acetylmuramoylalanine--D-glutamate ligase.